Reading from the N-terminus, the 631-residue chain is tRNA uridine 5-carboxymethylaminomethyl modification enzyme MnmG (631 aa).

FAD-binding positions include 13–18, valine 125, and serine 180; that span reads GGGHAG. 273–287 lines the NAD(+) pocket; that stretch reads GPRYCPSIEDKVMRF. Glutamine 370 serves as a coordination point for FAD.

It belongs to the MnmG family. Homodimer. Heterotetramer of two MnmE and two MnmG subunits. The cofactor is FAD.

The protein localises to the cytoplasm. Its function is as follows. NAD-binding protein involved in the addition of a carboxymethylaminomethyl (cmnm) group at the wobble position (U34) of certain tRNAs, forming tRNA-cmnm(5)s(2)U34. The protein is tRNA uridine 5-carboxymethylaminomethyl modification enzyme MnmG of Vibrio parahaemolyticus serotype O3:K6 (strain RIMD 2210633).